We begin with the raw amino-acid sequence, 46 residues long: Endochitinase 1A (46 aa).

Belongs to the glycosyl hydrolase 19 family. Chitinase class I subfamily.

It catalyses the reaction Random endo-hydrolysis of N-acetyl-beta-D-glucosaminide (1-&gt;4)-beta-linkages in chitin and chitodextrins.. In terms of biological role, defense against chitin-containing fungal and bacterial pathogens. The protein is Endochitinase 1A of Arachis hypogaea (Peanut).